Reading from the N-terminus, the 570-residue chain is Developmental and secondary metabolism regulator veA (570 aa).

4 disordered regions span residues M1–E24, E39–P60, D266–G491, and K504–R541. A Velvet domain is found at G25–R231. The short motif at E39–C44 is the Nuclear localization signal element. Positions S278–T287 are enriched in polar residues. Residues S315–A335 show a composition bias toward low complexity. Composition is skewed to polar residues over residues Q336–P354, Q363–G395, and N427–L445. The PEST stretch occupies residues P454 to R493. Residues R505 to M526 are compositionally biased toward basic and acidic residues.

The protein belongs to the velvet family. VeA subfamily. Component of the heterotrimeric velvet complex composed of laeA, veA and velB; VeA acting as a bridging protein between laeA and velB.

It is found in the nucleus. Its subcellular location is the cytoplasm. Component of the velvet transcription factor complex that controls sexual/asexual developmental ratio in response to light, promoting sexual development in the darkness while stimulating asexual sporulation under illumination. The velvet complex hat acts as a global regulator for secondary metabolite gene expression. Controls the expression of hundreds of genes, including those comprising more than a dozen known secondary metabolite gene clusters. Controls the expression of the gliotoxin gene cluster. Controls the expression of the fumagillin, fumitremorgin G, fumigaclavine C and glionitrin gene clusters. The regulation of the fumagillin gene cluster and fumagillin production is performed through direct control of the expression of fumR. Negatively regulates conidiation. Required for normal protease activity. This is Developmental and secondary metabolism regulator veA from Aspergillus fumigatus (strain ATCC MYA-4609 / CBS 101355 / FGSC A1100 / Af293) (Neosartorya fumigata).